The primary structure comprises 566 residues: Endoglucanase G (566 aa).

The N-terminal stretch at 1 to 30 (MKKAKAIFSLVVALMVLAIFCFAQNTGSTA) is a signal peptide. Catalysis depends on glutamate 226, which acts as the Proton donor. Glutamate 381 serves as the catalytic Nucleophile. Residues 473–494 (GTPQASDPPATPTATPTKPAAS) form a disordered region. Positions 474–494 (TPQASDPPATPTATPTKPAAS) are enriched in low complexity. In terms of domain architecture, Dockerin spans 497–564 (PSFIYGDINS…LLRSIDKLPH (68 aa)).

The protein belongs to the glycosyl hydrolase 5 (cellulase A) family.

It carries out the reaction Endohydrolysis of (1-&gt;4)-beta-D-glucosidic linkages in cellulose, lichenin and cereal beta-D-glucans.. In terms of biological role, this enzyme catalyzes the endohydrolysis of 1,4-beta-glucosidic linkages in cellulose, lichenin and cereal beta-D-glucans. This Acetivibrio thermocellus (strain ATCC 27405 / DSM 1237 / JCM 9322 / NBRC 103400 / NCIMB 10682 / NRRL B-4536 / VPI 7372) (Clostridium thermocellum) protein is Endoglucanase G (celG).